The primary structure comprises 361 residues: Putative dual-specificity RNA methyltransferase RlmN (361 aa).

Glu91 serves as the catalytic Proton acceptor. Residues Gln97–Arg329 form the Radical SAM core domain. [4Fe-4S] cluster is bound by residues Cys111, Cys115, and Cys118. Residues Gly163–Glu164, Ser195, Ser218–His220, and Thr296 contribute to the S-adenosyl-L-methionine site.

Belongs to the radical SAM superfamily. RlmN family. [4Fe-4S] cluster serves as cofactor.

Its subcellular location is the cytoplasm. The enzyme catalyses adenosine(2503) in 23S rRNA + 2 reduced [2Fe-2S]-[ferredoxin] + 2 S-adenosyl-L-methionine = 2-methyladenosine(2503) in 23S rRNA + 5'-deoxyadenosine + L-methionine + 2 oxidized [2Fe-2S]-[ferredoxin] + S-adenosyl-L-homocysteine. It catalyses the reaction adenosine(37) in tRNA + 2 reduced [2Fe-2S]-[ferredoxin] + 2 S-adenosyl-L-methionine = 2-methyladenosine(37) in tRNA + 5'-deoxyadenosine + L-methionine + 2 oxidized [2Fe-2S]-[ferredoxin] + S-adenosyl-L-homocysteine. Its function is as follows. Specifically methylates position 2 of adenine 2503 in 23S rRNA and position 2 of adenine 37 in tRNAs. This chain is Putative dual-specificity RNA methyltransferase RlmN, found in Streptococcus pneumoniae (strain CGSP14).